The following is a 312-amino-acid chain: Olfactory receptor 4F6 (312 aa).

Over 1-25 the chain is Extracellular; that stretch reads MDEANHSVVSEFVFLGLSDSRKIQL. A glycan (N-linked (GlcNAc...) asparagine) is linked at asparagine 5. A helical membrane pass occupies residues 26–49; that stretch reads LLFLFFSVFYVSSLMGNLLIVLTV. The Cytoplasmic portion of the chain corresponds to 50–57; sequence TSDPRLQS. Residues 58–79 form a helical membrane-spanning segment; that stretch reads PMYFLLANLSIINLVFCSSTAP. Over 80-100 the chain is Extracellular; the sequence is KMIYDLFRKHKTISFGGCVVQ. Residues cysteine 97 and cysteine 189 are joined by a disulfide bond. A helical membrane pass occupies residues 101–120; the sequence is IFFIHAVGGTEMVLLIAMAF. Residues 121–139 are Cytoplasmic-facing; it reads DRYVAICKPLHYLTIMNPQ. Residues 140 to 158 traverse the membrane as a helical segment; sequence RCILFLVISWIIGIIHSVI. Residues 159-195 lie on the Extracellular side of the membrane; that stretch reads QLAFVVDLLFCGPNELDSFFCDLPRFIKLACIETYTL. A helical membrane pass occupies residues 196–219; the sequence is GFMVTANSGFISLASFLILIISYI. The Cytoplasmic segment spans residues 220-235; sequence FILVTVQKKSSGGIFK. A helical membrane pass occupies residues 236–258; it reads AFSMLSAHVIVVVLVFGPLIFFY. Over 259-269 the chain is Extracellular; it reads IFPFPTSHLDK. A helical membrane pass occupies residues 270–289; it reads FLAIFDAVITPVLNPVIYTF. Over 290 to 312 the chain is Cytoplasmic; it reads RNKEMMVAMRRRCSQFVNYSKIF.

Belongs to the G-protein coupled receptor 1 family.

It localises to the cell membrane. Functionally, odorant receptor. The polypeptide is Olfactory receptor 4F6 (OR4F6) (Homo sapiens (Human)).